A 451-amino-acid chain; its full sequence is Methylenetetrahydrofolate--tRNA-(uracil-5-)-methyltransferase TrmFO (451 aa).

Gly10 to Gly15 is an FAD binding site.

Belongs to the MnmG family. TrmFO subfamily. The cofactor is FAD.

The protein localises to the cytoplasm. The catalysed reaction is uridine(54) in tRNA + (6R)-5,10-methylene-5,6,7,8-tetrahydrofolate + NADH + H(+) = 5-methyluridine(54) in tRNA + (6S)-5,6,7,8-tetrahydrofolate + NAD(+). It carries out the reaction uridine(54) in tRNA + (6R)-5,10-methylene-5,6,7,8-tetrahydrofolate + NADPH + H(+) = 5-methyluridine(54) in tRNA + (6S)-5,6,7,8-tetrahydrofolate + NADP(+). Functionally, catalyzes the folate-dependent formation of 5-methyl-uridine at position 54 (M-5-U54) in all tRNAs. The chain is Methylenetetrahydrofolate--tRNA-(uracil-5-)-methyltransferase TrmFO from Anaeromyxobacter sp. (strain Fw109-5).